The primary structure comprises 176 residues: Transcription termination/antitermination protein NusG (176 aa).

In terms of domain architecture, KOW spans 125–149 (GEVVRVVEGPFANFTATVEEYDVEH).

This sequence belongs to the NusG family.

In terms of biological role, participates in transcription elongation, termination and antitermination. This is Transcription termination/antitermination protein NusG from Helicobacter pylori (strain ATCC 700392 / 26695) (Campylobacter pylori).